The sequence spans 495 residues: ATP synthase subunit beta, chloroplastic (495 aa).

ATP is bound at residue 172–179 (GGAGVGKT).

It belongs to the ATPase alpha/beta chains family. F-type ATPases have 2 components, CF(1) - the catalytic core - and CF(0) - the membrane proton channel. CF(1) has five subunits: alpha(3), beta(3), gamma(1), delta(1), epsilon(1). CF(0) has four main subunits: a(1), b(1), b'(1) and c(9-12).

The protein localises to the plastid. Its subcellular location is the chloroplast thylakoid membrane. The enzyme catalyses ATP + H2O + 4 H(+)(in) = ADP + phosphate + 5 H(+)(out). In terms of biological role, produces ATP from ADP in the presence of a proton gradient across the membrane. The catalytic sites are hosted primarily by the beta subunits. In Bowiea volubilis (Climbing onion), this protein is ATP synthase subunit beta, chloroplastic.